Consider the following 240-residue polypeptide: Ribonuclease PH (240 aa).

Residues Arg87 and 125–127 contribute to the phosphate site; that span reads GTR.

This sequence belongs to the RNase PH family. As to quaternary structure, homohexameric ring arranged as a trimer of dimers.

The enzyme catalyses tRNA(n+1) + phosphate = tRNA(n) + a ribonucleoside 5'-diphosphate. Its function is as follows. Phosphorolytic 3'-5' exoribonuclease that plays an important role in tRNA 3'-end maturation. Removes nucleotide residues following the 3'-CCA terminus of tRNAs; can also add nucleotides to the ends of RNA molecules by using nucleoside diphosphates as substrates, but this may not be physiologically important. Probably plays a role in initiation of 16S rRNA degradation (leading to ribosome degradation) during starvation. This Pseudomonas syringae pv. tomato (strain ATCC BAA-871 / DC3000) protein is Ribonuclease PH.